The chain runs to 20 residues: GXFGKAFXSVSNFAKKHKTA.

Hemocytes and pharyngeal tissues.

The protein resides in the secreted. Bactericidal against several Gram-positive and Gram-negative bacteria. This chain is Styelin-A, found in Styela clava (Sea squirt).